A 349-amino-acid polypeptide reads, in one-letter code: Probable FBD-associated F-box protein At5g38565 (349 aa).

The F-box domain occupies 1-47 (MDIFNGLPDDVLVKILSFVPTKVAVSTSILSKRWEFLWMWLPRLDFG). An FBD domain is found at 263-311 (CWNQPISVPECLLESLQIFNLSHYFGKQQDLDFVVYILKNACHLKTATI).

The polypeptide is Probable FBD-associated F-box protein At5g38565 (Arabidopsis thaliana (Mouse-ear cress)).